Reading from the N-terminus, the 781-residue chain is DEAD-box ATP-dependent RNA helicase 50 (781 aa).

Disordered stretches follow at residues 72-103, 117-148, 166-240, 254-292, and 313-342; these read EFAPPPSSDLLSSIPSESARRNGSRSRGLTAS, GKVTQKKQHMSHNEEEDEDDASDENYSADEGF, IPRS…KGDR, GRAIDEVSNPRKFNDNERAESRSSYSRDSSANSRGREDR, and YNPRRFTDNERGLRGGSHSKGSDTNSRGWG. The segment covering 79 to 88 has biased composition (low complexity); it reads SDLLSSIPSE. The segment covering 130-143 has biased composition (acidic residues); sequence EEEDEDDASDENYS. Residues 171–197 show a composition bias toward basic and acidic residues; the sequence is KSAERNEVKRASKVRESRESRRDLDRL. The span at 198 to 208 shows a compositional bias: acidic residues; the sequence is EGDDEDVDEVS. The segment covering 216–226 has biased composition (polar residues); sequence NQRAGSRSSYS. Basic and acidic residues predominate over residues 254 to 274; it reads GRAIDEVSNPRKFNDNERAES. Residues 275–286 are compositionally biased toward low complexity; that stretch reads RSSYSRDSSANS. Residues 313–325 show a composition bias toward basic and acidic residues; the sequence is YNPRRFTDNERGL. Residues 374–402 carry the Q motif motif; it reads KTFAEIGCSEDMMKALKEQNFDRPAHIQA. Residues 405–586 enclose the Helicase ATP-binding domain; that stretch reads FSPVIDGKSC…VEVFPDCEVV (182 aa). 418-425 serves as a coordination point for ATP; it reads DQSGSGKT. A DEAD box motif is present at residues 533–536; it reads DEVD. A Helicase C-terminal domain is found at 621–781; sequence NKKTALLQIM…DVPNAYEFTT (161 aa).

It belongs to the DEAD box helicase family.

The catalysed reaction is ATP + H2O = ADP + phosphate + H(+). Probably involved in resistance to biotic and abiotic stresses. This Arabidopsis thaliana (Mouse-ear cress) protein is DEAD-box ATP-dependent RNA helicase 50 (RH50).